The sequence spans 362 residues: Sulfate/thiosulfate import ATP-binding protein CysA (362 aa).

An ABC transporter domain is found at 13–243 (ITVRDAYKRY…PTNAFVMSFL (231 aa)). 45 to 52 (GPSGSGKS) serves as a coordination point for ATP.

It belongs to the ABC transporter superfamily. Sulfate/tungstate importer (TC 3.A.1.6) family. The complex is composed of two ATP-binding proteins (CysA), two transmembrane proteins (CysT and CysW) and a solute-binding protein (CysP).

It is found in the cell membrane. It carries out the reaction sulfate(out) + ATP + H2O = sulfate(in) + ADP + phosphate + H(+). The catalysed reaction is thiosulfate(out) + ATP + H2O = thiosulfate(in) + ADP + phosphate + H(+). Part of the ABC transporter complex CysAWTP involved in sulfate/thiosulfate import. Responsible for energy coupling to the transport system. The sequence is that of Sulfate/thiosulfate import ATP-binding protein CysA from Mycolicibacterium paratuberculosis (strain ATCC BAA-968 / K-10) (Mycobacterium paratuberculosis).